Here is a 507-residue protein sequence, read N- to C-terminus: Maturase K (507 aa).

Belongs to the intron maturase 2 family. MatK subfamily.

The protein localises to the plastid. It is found in the chloroplast. Functionally, usually encoded in the trnK tRNA gene intron. Probably assists in splicing its own and other chloroplast group II introns. This Kalmia buxifolia (Sand myrtle) protein is Maturase K.